The primary structure comprises 84 residues: Beta-defensin 119 (84 aa).

The first 21 residues, 1-21 (MKLLYLFLAILLAIEEPVISG), serve as a signal peptide directing secretion. Intrachain disulfides connect Cys28–Cys55, Cys35–Cys49, and Cys39–Cys56.

Belongs to the beta-defensin family.

The protein localises to the secreted. Functionally, has antibacterial activity. In Gorilla gorilla gorilla (Western lowland gorilla), this protein is Beta-defensin 119 (DEFB119).